The following is a 516-amino-acid chain: Endo-acting ulvan lyase (516 aa).

Residues 1-24 (MLEKTTLKNIILIHFLMFLAVVTA) form the signal peptide. A disulfide bridge connects residues C38 and C65. Ca(2+)-binding residues include G42, N44, D62, S64, A67, and N68. Y138 contributes to the substrate binding site. The active-site Proton acceptor is the K143. Substrate contacts are provided by residues 191 to 195 (EGDGR) and 260 to 263 (YRVK). The active-site Proton donor/acceptor is Y260. Residues 289-429 (PIGDVYKLKN…VWKAIAVESL (141 aa)) form a ulvan-binding domain region. Positions 430–516 (SVDENAILAS…NKYHKKLIVK (87 aa)) are cleaved as a propeptide — removed by the type IX secretion system (T9SS).

Belongs to the polysaccharide lyase 28 family. Ca(2+) is required as a cofactor.

It is found in the secreted. Its function is as follows. Ulvan lyase involved in ulvan degradation. Ulvan is the main polysaccharide component of the Ulvales (green seaweed) cell wall. It is composed of disaccharide building blocks comprising 3-sulfated rhamnose (Rha3S) linked to D-glucuronic acid (GlcA), L-iduronic acid (IduA), or D-xylose (Xyl). Ulvan lyase catalyzes the endolytic cleavage of the glycosidic bond between Rha3S and the uronic acids GlcA or IduA, producing oligosaccharides that have unsaturated 4-deoxy-L-threo-hex-4-enopyranosiduronic acid (deltaUA) at the non-reducing end. This results eventually in the degradation of the ulvan polysaccharide into deltaUA-Rha3S disaccharides and deltaUA-Rha3S-Xyl-Rha3S tetrasaccharides. The protein is Endo-acting ulvan lyase of Formosa agariphila (strain DSM 15362 / KCTC 12365 / LMG 23005 / KMM 3901 / M-2Alg 35-1).